Reading from the N-terminus, the 335-residue chain is UPF0284 protein TK0853 (335 aa).

This sequence belongs to the UPF0284 family.

In Thermococcus kodakarensis (strain ATCC BAA-918 / JCM 12380 / KOD1) (Pyrococcus kodakaraensis (strain KOD1)), this protein is UPF0284 protein TK0853.